Here is a 562-residue protein sequence, read N- to C-terminus: Arylsulfatase H (562 aa).

Ca(2+) contacts are provided by aspartate 15, aspartate 16, and cysteine 55. Residue cysteine 55 is the Nucleophile of the active site. Cysteine 55 is modified (3-oxoalanine (Cys)). Residue lysine 115 participates in substrate binding. Histidine 117 is an active-site residue. A run of 2 helical transmembrane segments spans residues leucine 167 to alanine 187 and tryptophan 189 to isoleucine 209. Histidine 271 is a binding site for substrate. Residues aspartate 323 and asparagine 324 each contribute to the Ca(2+) site.

This sequence belongs to the sulfatase family. Ca(2+) is required as a cofactor. Post-translationally, the conversion to 3-oxoalanine (also known as C-formylglycine, FGly), of a serine or cysteine residue in prokaryotes and of a cysteine residue in eukaryotes, is critical for catalytic activity.

Its subcellular location is the membrane. The polypeptide is Arylsulfatase H (ARSH) (Canis lupus familiaris (Dog)).